An 80-amino-acid chain; its full sequence is DNA-binding protein S1FA2 (80 aa).

The short motif at 54 to 59 is the Nuclear localization signal element; that stretch reads PPRKKK. A compositionally biased stretch (basic residues) spans 55–70; that stretch reads PRKKKPVSKKKMKREK. Positions 55 to 80 are disordered; it reads PRKKKPVSKKKMKREKLKQGVSAPGE.

The protein belongs to the S1FA transcription factor family.

It localises to the nucleus. Its function is as follows. DNA-binding protein that specifically recognizes a negative element (S1F) within the RPS1 promoter. This is DNA-binding protein S1FA2 (S1FA2) from Oryza sativa subsp. japonica (Rice).